A 156-amino-acid chain; its full sequence is Cyclin-dependent protein kinase inhibitor SMR10 (156 aa).

The tract at residues 52–90 (QDQDLEPKSQETNNCSRKEGATVKKEEEEEDDYCKTPTR) is disordered. Basic and acidic residues predominate over residues 67–77 (SRKEGATVKKE).

Probable cyclin-dependent protein kinase (CDK) inhibitor that functions as a repressor of mitosis in the endoreduplication cell cycle. The chain is Cyclin-dependent protein kinase inhibitor SMR10 from Arabidopsis thaliana (Mouse-ear cress).